The primary structure comprises 406 residues: MGVFQKGEDQKGESANMKPIPLLSSYDMGKFNLSHRVVLAPLTRSRSYDNLPQSHAMEYYSQRATKGGLLIAEATGVSSDAQGMSVIPHTPGIWTKEQVEAWKPIVDAVHAKGGIFFCQIWHVGRASDMEERPISSTDKPIEKTEENYFLGFSTPRSLTVEEIPDVIKHFTLAAKNALEAGFDGVEVHAANGFLLDQFMKDGVNARADEYGGGVAGRCRFALEVVDAVAAEAGAGRTGVRLSPYSRCLDCADSDPDALAAHMARELGSRGVLYCNVVEPEMVATPAEGGSGGETMRIPHRLRAVREAFAGTLMVGGGYDREEGNWAVAGGYADLVVYGRLFLANPDLPRRFRLGAPLNGYDRATFYTADPVAGYTDYPFLDDDGDDGLAASAASASSNKSGDQDGV.

Residues 41 to 43 (PLT), Ala74, and Gln119 each bind FMN. 188–191 (HAAN) provides a ligand contact to substrate. Residues Arg240, Gly317, and 338-339 (GR) contribute to the FMN site.

The protein belongs to the NADH:flavin oxidoreductase/NADH oxidase family. It depends on FMN as a cofactor.

Functionally, putative oxophytodienoate reductase that may be involved in the biosynthesis or metabolism of oxylipin signaling molecules. This chain is Putative 12-oxophytodienoate reductase 12 (OPR12), found in Oryza sativa subsp. japonica (Rice).